We begin with the raw amino-acid sequence, 225 residues long: Uracil-DNA glycosylase (225 aa).

D68 serves as the catalytic Proton acceptor.

Belongs to the uracil-DNA glycosylase (UDG) superfamily. UNG family.

It is found in the cytoplasm. The catalysed reaction is Hydrolyzes single-stranded DNA or mismatched double-stranded DNA and polynucleotides, releasing free uracil.. Functionally, excises uracil residues from the DNA which can arise as a result of misincorporation of dUMP residues by DNA polymerase or due to deamination of cytosine. The protein is Uracil-DNA glycosylase of Mycolicibacterium gilvum (strain PYR-GCK) (Mycobacterium gilvum (strain PYR-GCK)).